The primary structure comprises 290 residues: Oxaloacetate decarboxylase (290 aa).

Ser-53 provides a ligand contact to substrate. Asp-91 contributes to the Mg(2+) binding site. Residues Arg-162 and His-238 each contribute to the substrate site.

It belongs to the isocitrate lyase/PEP mutase superfamily. Oxaloacetate decarboxylase family. As to quaternary structure, homotetramer; dimer of dimers. The cofactor is Mg(2+).

It carries out the reaction oxaloacetate + H(+) = pyruvate + CO2. Its function is as follows. Catalyzes the decarboxylation of oxaloacetate into pyruvate. Seems to play a role in maintaining cellular concentrations of bicarbonate and pyruvate. The sequence is that of Oxaloacetate decarboxylase from Ectopseudomonas mendocina (strain ymp) (Pseudomonas mendocina).